Here is a 304-residue protein sequence, read N- to C-terminus: MTLTPPKKTHLKQLEAESIHIIREVAAEFDNPVMLYSIGKDSAVMLHLAMKAFAPGKPPFPLMHVDTTWKFREMITFRDQMAEKLGMKLLVHTNQEGVEQGIGPFTHGSAKHTDVMKTQALKQALDKYGFDAAFGGARRDEEKSRAKERVYSFRDKFHRWDPKNQRPELWNLYNGKVNKGESIRVFPLSNWTELDIWQYIYLENIDIVPLYYAAERPVVERDGTLIMVDDDRMPLEPGEQPMMKMVRFRTLGCYPLTGAVESEAATLPDIIQEMLLTTTSERQGRVIDHDGAASMEQKKREGYF.

This sequence belongs to the PAPS reductase family. CysD subfamily. As to quaternary structure, heterodimer composed of CysD, the smaller subunit, and CysN.

It catalyses the reaction sulfate + ATP + H(+) = adenosine 5'-phosphosulfate + diphosphate. Its pathway is sulfur metabolism; hydrogen sulfide biosynthesis; sulfite from sulfate: step 1/3. Functionally, with CysN forms the ATP sulfurylase (ATPS) that catalyzes the adenylation of sulfate producing adenosine 5'-phosphosulfate (APS) and diphosphate, the first enzymatic step in sulfur assimilation pathway. APS synthesis involves the formation of a high-energy phosphoric-sulfuric acid anhydride bond driven by GTP hydrolysis by CysN coupled to ATP hydrolysis by CysD. The chain is Sulfate adenylyltransferase subunit 2 1 from Marinobacter nauticus (strain ATCC 700491 / DSM 11845 / VT8) (Marinobacter aquaeolei).